The chain runs to 75 residues: MPHIDIKCFPRELDEQQKAALAADITDVIIRHLNSKDSSISIALQQIQPESWQAIWDAEIEPQMEALIKKPGYSM.

The active-site Proton acceptor; via imino nitrogen is the P2.

This sequence belongs to the 4-oxalocrotonate tautomerase family. PptA subfamily. Homodimer.

The protein localises to the cytoplasm. The chain is Tautomerase PptA from Shigella sonnei (strain Ss046).